The primary structure comprises 451 residues: UDP-N-acetylmuramoylalanine--D-glutamate ligase (451 aa).

ATP is bound at residue 116 to 122 (GTNGKTT).

Belongs to the MurCDEF family.

Its subcellular location is the cytoplasm. It catalyses the reaction UDP-N-acetyl-alpha-D-muramoyl-L-alanine + D-glutamate + ATP = UDP-N-acetyl-alpha-D-muramoyl-L-alanyl-D-glutamate + ADP + phosphate + H(+). It participates in cell wall biogenesis; peptidoglycan biosynthesis. Its function is as follows. Cell wall formation. Catalyzes the addition of glutamate to the nucleotide precursor UDP-N-acetylmuramoyl-L-alanine (UMA). The protein is UDP-N-acetylmuramoylalanine--D-glutamate ligase of Clostridioides difficile (strain 630) (Peptoclostridium difficile).